We begin with the raw amino-acid sequence, 222 residues long: Putative auxin response factor 23 (222 aa).

The TF-B3 DNA-binding region spans 126-222 (FTKVLTASDT…ETGELRVGIR (97 aa)).

Belongs to the ARF family. As to quaternary structure, homo and heterodimers.

Its subcellular location is the nucleus. Auxin response factors (ARFs) are transcriptional factors that binds specifically to the DNA sequence 5'-TGTCTC-3' found in the auxin-responsive promoter elements (AuxREs). Could act as transcriptional activator or repressor. Formation of heterodimers with Aux/IAA proteins may alter their ability to modulate early auxin response genes expression. This Arabidopsis thaliana (Mouse-ear cress) protein is Putative auxin response factor 23 (ARF23).